The primary structure comprises 267 residues: Putative transcription factor Ovo-like 1 (267 aa).

4 C2H2-type zinc fingers span residues F118–H140, H146–H168, Y174–H197, and Y213–H235.

In terms of tissue distribution, expressed in fetal kidney, and also in adult pancreas and placenta. Not expressed in intestine, peripheral blood lymphocytes and ovary.

It localises to the nucleus. Functionally, putative transcription factor. Involved in hair formation and spermatogenesis. May function in the differentiation and/or maintenance of the urogenital system. This is Putative transcription factor Ovo-like 1 (OVOL1) from Homo sapiens (Human).